The primary structure comprises 223 residues: Sigma non-opioid intracellular receptor 1 (223 aa).

Residues 1-9 are Lumenal-facing; the sequence is MPWAAGRRW. Residues 2 to 8 form a targeting to endoplasmic reticulum-associated lipid droplets region; that stretch reads PWAAGRR. The helical transmembrane segment at 10 to 30 threads the bilayer; sequence AWITLILTIIAVLIQAAWLWL. The Cytoplasmic segment spans residues 31 to 223; it reads GTQNFVFSRE…LTTYLFGQDS (193 aa). The interval 99–106 is important for ligand-binding; that stretch reads SLSEYVLL. Residues 177 to 223 are C-terminal hydrophobic region; it reads VIPSTLFFALADTFFSTQDYLTLFYTLRAYARGLRLELTTYLFGQDS.

It belongs to the ERG2 family. As to quaternary structure, homotrimer. Interacts with KCNA4. Interacts with KCNA2; cocaine consumption leads to increased interaction. Forms a ternary complex with ANK2 and ITPR3. The complex is disrupted by agonists. Interacts with RNF112 in an oxidative stress-regulated manner. In terms of tissue distribution, widely expressed with higher expression in liver, brain, kidney and thymus. Expressed throughout the brain with higher expression within cerebral cortex, hippocampus and cerebellum. Within the hippocampus expressed in cornu ammonis pyramidal neurons, the granular cells of the dentate gyrus as well as interneurons. Within the cerebellum, expressed in Purkinje cell bodies. Highly expressed in the brainstem and motor neurons of the spinal cord. Expressed by neural retina, retinal pigment epithelial cells and lens.

The protein resides in the nucleus inner membrane. The protein localises to the nucleus outer membrane. It is found in the nucleus envelope. It localises to the cytoplasmic vesicle. Its subcellular location is the endoplasmic reticulum membrane. The protein resides in the membrane. The protein localises to the lipid droplet. It is found in the cell junction. It localises to the cell membrane. Its subcellular location is the cell projection. The protein resides in the growth cone. The protein localises to the postsynaptic density membrane. Functionally, functions in lipid transport from the endoplasmic reticulum and is involved in a wide array of cellular functions probably through regulation of the biogenesis of lipid microdomains at the plasma membrane. Involved in the regulation of different receptors it plays a role in BDNF signaling and EGF signaling. Also regulates ion channels like the potassium channel and could modulate neurotransmitter release. Plays a role in calcium signaling through modulation together with ANK2 of the ITP3R-dependent calcium efflux at the endoplasmic reticulum. Plays a role in several other cell functions including proliferation, survival and death. Originally identified for its ability to bind various psychoactive drugs it is involved in learning processes, memory and mood alteration. Necessary for proper mitochondrial axonal transport in motor neurons, in particular the retrograde movement of mitochondria. Plays a role in protecting cells against oxidative stress-induced cell death via its interaction with RNF112. This chain is Sigma non-opioid intracellular receptor 1 (Sigmar1), found in Mus musculus (Mouse).